Reading from the N-terminus, the 232-residue chain is Protein Mis18-alpha (232 aa).

A phosphoserine mark is found at Ser-36, Ser-39, and Ser-40. Residues Pro-79–Leu-177 enclose the Mis18 domain. Residues Cys-84, Cys-87, Cys-140, and Cys-143 each contribute to the Zn(2+) site. Residue Lys-161 forms a Glycyl lysine isopeptide (Lys-Gly) (interchain with G-Cter in SUMO2) linkage. At Ser-232 the chain carries Phosphoserine.

Belongs to the mis18 family. In terms of assembly, homodimer, and heterodimer with OIP5/MIS18B. Identified in a complex containing MIS18A, OIP5/MIS18B, MIS18BP1, RBBP7 and RBBP4.

The protein resides in the nucleus. It localises to the chromosome. It is found in the centromere. Functionally, required for recruitment of CENPA to centromeres and normal chromosome segregation during mitosis. In Otolemur garnettii (Small-eared galago), this protein is Protein Mis18-alpha (MIS18A).